Reading from the N-terminus, the 56-residue chain is UPF0434 protein CBUD_1597.1 (56 aa).

This sequence belongs to the UPF0434 family.

The chain is UPF0434 protein CBUD_1597.1 from Coxiella burnetii (strain Dugway 5J108-111).